A 373-amino-acid chain; its full sequence is uncharacterized protein (373 aa).

The 155-residue stretch at 14–168 (KKIVNKIIDE…LMDTPGVLEM (155 aa)) folds into the CP-type G domain. GTP is bound at residue 117-124 (GYPNVGKS).

The protein belongs to the TRAFAC class YlqF/YawG GTPase family.

This is an uncharacterized protein from Methanocaldococcus jannaschii (strain ATCC 43067 / DSM 2661 / JAL-1 / JCM 10045 / NBRC 100440) (Methanococcus jannaschii).